Consider the following 287-residue polypeptide: Transcription cofactor vestigial-like protein 4 (287 aa).

Disordered stretches follow at residues 44 to 68 and 251 to 287; these read ASAL…SMEP and AAKD…SVVS. Residues Ser58 and Ser271 each carry the phosphoserine modification. Residues 275–287 show a composition bias toward low complexity; the sequence is HMVSHSHSPSVVS.

This sequence belongs to the vestigial family. Interacts with TEFs. Interacts with IRF2BP2.

It localises to the nucleus. Its function is as follows. May act as a specific coactivator for the mammalian TEFs. The chain is Transcription cofactor vestigial-like protein 4 (Vgll4) from Mus musculus (Mouse).